The following is a 314-amino-acid chain: Methylglutaconyl-CoA hydratase, mitochondrial (314 aa).

Residues 1-42 (MAAAAPGALGALRTGRVRLVAACCARLGPAAWARGTAPRRGY) constitute a mitochondrion transit peptide. Residue Lys-75 is modified to N6-acetyllysine; alternate. Lys-75 carries the post-translational modification N6-succinyllysine; alternate. An RNA-binding region spans residues 80–94 (KNLLKMLSKAVDALK). At Lys-84 the chain carries N6-succinyllysine. Residues Lys-88 and Lys-119 each carry the N6-acetyllysine; alternate modification. An N6-succinyllysine; alternate mark is found at Lys-88 and Lys-119. Residues Lys-123 and Lys-135 each carry the N6-succinyllysine modification. N6-acetyllysine; alternate occurs at positions 179 and 186. N6-succinyllysine; alternate is present on residues Lys-179 and Lys-186. An N6-succinyllysine modification is found at Lys-304.

It belongs to the enoyl-CoA hydratase/isomerase family. In terms of assembly, homohexamer. As to expression, detected in heart, brain, liver, spleen, skeletal muscle and kidney. Expressed in brain, kidney, liver and spleen tissue (at protein level).

Its subcellular location is the mitochondrion. The enzyme catalyses (3S)-3-hydroxy-3-methylglutaryl-CoA = 3-methyl-(2E)-glutaconyl-CoA + H2O. It catalyses the reaction (3S)-citramalyl-CoA = itaconyl-CoA + H2O. The catalysed reaction is 3-hydroxyisovaleryl-CoA = 3-methylbut-2-enoyl-CoA + H2O. It carries out the reaction (S)-3-hydroxyglutaryl-CoA = (2E)-glutaconyl-CoA + H2O. It functions in the pathway amino-acid degradation; L-leucine degradation; (S)-3-hydroxy-3-methylglutaryl-CoA from 3-isovaleryl-CoA: step 3/3. In terms of biological role, catalyzes the fifth step in the leucine degradation pathway, the reversible hydration of 3-methylglutaconyl-CoA (3-MG-CoA) to 3-hydroxy-3-methylglutaryl-CoA (HMG-CoA). Can catalyze the reverse reaction but at a much lower rate in vitro. HMG-CoA is then quickly degraded by another enzyme (such as HMG-CoA lyase) to give acetyl-CoA and acetoacetate. Uses other substrates such as (2E)-glutaconyl-CoA efficiently in vitro, and to a lesser extent 3-methylcrotonyl-CoA (3-methyl-(2E)-butenoyl-CoA), crotonyl-CoA ((2E)-butenoyl-CoA) and 3-hydroxybutanoyl-CoA (the missing carboxylate reduces affinity to the active site). Originally it was identified as an RNA-binding protein as it binds to AU-rich elements (AREs) in vitro. AREs direct rapid RNA degradation and mRNA deadenylation. Might have itaconyl-CoA hydratase activity, converting itaconyl-CoA into citramalyl-CoA in the C5-dicarboxylate catabolism pathway. The C5-dicarboxylate catabolism pathway is required to detoxify itaconate, an antimicrobial metabolite and immunomodulator produced by macrophages during certain infections, that can act as a vitamin B12-poisoning metabolite. In Mus musculus (Mouse), this protein is Methylglutaconyl-CoA hydratase, mitochondrial (Auh).